A 203-amino-acid polypeptide reads, in one-letter code: Gramillins biosynthetic cluster protein FGSG_00038 (203 aa).

Its pathway is mycotoxin biosynthesis. Functionally, part of the gene cluster that mediates the biosynthesis of gramillins A and B, bicyclic lipopeptides that induce cell death in maize leaves but not in wheat leaves. The nonribosomal peptide synthetase GRA1 incorporates respectively a glutamic adic (Glu), a leucine (Leu), a serine (Ser), a hydroxyglutamine (HOGln), a 2-amino decanoic acid, and 2 cysteins (CysB and CysA). The biosynthesis of 2-amino decanoic acid incorporated in gramillins could be initiated by a fatty acid synthase composed of the alpha and beta subunits FGSG_00036 and FGSG_11656. The cytochrome P450 monooxygenase FGSG_15680 could hydroxylate the fatty acid chain. Subsequent oxidation to the ketone by the oxidoreductase FGSG_00048 and transamination by aminotransferase FGSG_00049 could form 2-amino-decanoic acid. On the other hand, FGSG_15680 could also be responsible for the HO-modified glutamine at the gamma-position. Whether hydroxylation occurs on the fully assembled product or on the Gln residue prior to assembly into the gramillins requires further proof. The thioredoxin FGSG_00043 could also be required for the disulfide-bond formation between CysA and CysB. The specific involvement of the remaining proteins from the cluster is more difficult to discern, but could have broader regulatory (FGSG_00040 and FGSG_11657) or enzymatic functions (FGSG_00044 and FGSG_00045). The final C-domain of GRA1 does not possess the expected sequence of a termination CT domain, often implicated in macrocyclization and release of a cyclopeptidein fungal NRPs; and the thioesterase FGSG_00047 may act in concert with the terminal C-domain of GRA1 to catalyze the formation of the macrocyclic anhydride and release of the products. The protein is Gramillins biosynthetic cluster protein FGSG_00038 of Gibberella zeae (strain ATCC MYA-4620 / CBS 123657 / FGSC 9075 / NRRL 31084 / PH-1) (Wheat head blight fungus).